The sequence spans 871 residues: Alanine--tRNA ligase (871 aa).

Residues His-561, His-565, Cys-665, and His-669 each contribute to the Zn(2+) site.

This sequence belongs to the class-II aminoacyl-tRNA synthetase family. Zn(2+) serves as cofactor.

The protein localises to the cytoplasm. It carries out the reaction tRNA(Ala) + L-alanine + ATP = L-alanyl-tRNA(Ala) + AMP + diphosphate. Functionally, catalyzes the attachment of alanine to tRNA(Ala) in a two-step reaction: alanine is first activated by ATP to form Ala-AMP and then transferred to the acceptor end of tRNA(Ala). Also edits incorrectly charged Ser-tRNA(Ala) and Gly-tRNA(Ala) via its editing domain. This Dehalococcoides mccartyi (strain ATCC BAA-2266 / KCTC 15142 / 195) (Dehalococcoides ethenogenes (strain 195)) protein is Alanine--tRNA ligase.